Consider the following 748-residue polypeptide: Choline O-acetyltransferase (748 aa).

Basic residues predominate over residues 1–10 (MGLRTAKKRG). The tract at residues 1–89 (MGLRTAKKRG…EWCGAASAEA (89 aa)) is disordered. Positions 17–32 (WKREEGGGTRGRREVR) are enriched in basic and acidic residues. Over residues 40–53 (GGRGDPGDVGGPAG) the composition is skewed to gly residues. Composition is skewed to low complexity over residues 54–65 (NPGCSPHPRAAT) and 73–89 (HTPA…SAEA). Ser125 is subject to Phosphoserine. The Proton acceptor role is filled by His442. Ser473 bears the Phosphoserine mark. Residues 520–532 (GKTF…CSPD), Ser558, and Gln659 each bind CoA. The interval 727–748 (PTESKPLATKEKATRPSQGHQP) is disordered.

This sequence belongs to the carnitine/choline acetyltransferase family.

It catalyses the reaction choline + acetyl-CoA = acetylcholine + CoA. Catalyzes the reversible synthesis of acetylcholine (ACh) from acetyl CoA and choline at cholinergic synapses. The sequence is that of Choline O-acetyltransferase (CHAT) from Homo sapiens (Human).